Here is a 308-residue protein sequence, read N- to C-terminus: tRNA dimethylallyltransferase 2 (308 aa).

13–20 lines the ATP pocket; sequence GPTASGKT. 15–20 is a binding site for substrate; the sequence is TASGKT. The interaction with substrate tRNA stretch occupies residues 38–41; sequence DSRQ.

This sequence belongs to the IPP transferase family. Monomer. Mg(2+) serves as cofactor.

It catalyses the reaction adenosine(37) in tRNA + dimethylallyl diphosphate = N(6)-dimethylallyladenosine(37) in tRNA + diphosphate. Its function is as follows. Catalyzes the transfer of a dimethylallyl group onto the adenine at position 37 in tRNAs that read codons beginning with uridine, leading to the formation of N6-(dimethylallyl)adenosine (i(6)A). The protein is tRNA dimethylallyltransferase 2 of Bacteroides fragilis (strain YCH46).